The chain runs to 511 residues: 2-isopropylmalate synthase (511 aa).

The Pyruvate carboxyltransferase domain occupies 6 to 269; sequence IIIFDTTLRD…YTDIKCENIF (264 aa). 4 residues coordinate Mn(2+): Asp15, His203, His205, and Asn239. The regulatory domain stretch occupies residues 394-511; that stretch reads ILEKLSVISG…SLKVEERKMA (118 aa).

Belongs to the alpha-IPM synthase/homocitrate synthase family. LeuA type 1 subfamily. In terms of assembly, homodimer. It depends on Mn(2+) as a cofactor.

Its subcellular location is the cytoplasm. It carries out the reaction 3-methyl-2-oxobutanoate + acetyl-CoA + H2O = (2S)-2-isopropylmalate + CoA + H(+). It functions in the pathway amino-acid biosynthesis; L-leucine biosynthesis; L-leucine from 3-methyl-2-oxobutanoate: step 1/4. Catalyzes the condensation of the acetyl group of acetyl-CoA with 3-methyl-2-oxobutanoate (2-ketoisovalerate) to form 3-carboxy-3-hydroxy-4-methylpentanoate (2-isopropylmalate). This Campylobacter jejuni subsp. jejuni serotype O:6 (strain 81116 / NCTC 11828) protein is 2-isopropylmalate synthase.